The following is a 340-amino-acid chain: Extracellular matrix protein-binding protein emp (340 aa).

Residues 1–26 form the signal peptide; sequence MKKKLLVLTMSTLFATQLINSNHANA.

The protein resides in the cell surface. Adhesin that binds to the host cell extracellular matrix proteins fibronectin, fibrinogen, collagen, and vitronectin. This is Extracellular matrix protein-binding protein emp (emp) from Staphylococcus aureus.